A 252-amino-acid polypeptide reads, in one-letter code: Imidazole glycerol phosphate synthase subunit HisF (252 aa).

Residues D11 and D130 contribute to the active site.

This sequence belongs to the HisA/HisF family. As to quaternary structure, heterodimer of HisH and HisF.

It localises to the cytoplasm. The catalysed reaction is 5-[(5-phospho-1-deoxy-D-ribulos-1-ylimino)methylamino]-1-(5-phospho-beta-D-ribosyl)imidazole-4-carboxamide + L-glutamine = D-erythro-1-(imidazol-4-yl)glycerol 3-phosphate + 5-amino-1-(5-phospho-beta-D-ribosyl)imidazole-4-carboxamide + L-glutamate + H(+). Its pathway is amino-acid biosynthesis; L-histidine biosynthesis; L-histidine from 5-phospho-alpha-D-ribose 1-diphosphate: step 5/9. In terms of biological role, IGPS catalyzes the conversion of PRFAR and glutamine to IGP, AICAR and glutamate. The HisF subunit catalyzes the cyclization activity that produces IGP and AICAR from PRFAR using the ammonia provided by the HisH subunit. This chain is Imidazole glycerol phosphate synthase subunit HisF, found in Bacillus licheniformis (strain ATCC 14580 / DSM 13 / JCM 2505 / CCUG 7422 / NBRC 12200 / NCIMB 9375 / NCTC 10341 / NRRL NRS-1264 / Gibson 46).